The sequence spans 363 residues: NAD(P)H-quinone oxidoreductase subunit 1, chloroplastic (363 aa).

7 consecutive transmembrane segments (helical) span residues 30–50 (LVPI…IVWL), 98–118 (FSIG…VIPF), 129–149 (VGVF…LMSG), 165–185 (AAQS…ISLL), 253–273 (FAFF…FVTI), 303–323 (TTTE…ISIT), and 336–356 (LLNL…LLTT).

Belongs to the complex I subunit 1 family. In terms of assembly, NDH is composed of at least 16 different subunits, 5 of which are encoded in the nucleus.

The protein localises to the plastid. It is found in the chloroplast thylakoid membrane. It carries out the reaction a plastoquinone + NADH + (n+1) H(+)(in) = a plastoquinol + NAD(+) + n H(+)(out). The catalysed reaction is a plastoquinone + NADPH + (n+1) H(+)(in) = a plastoquinol + NADP(+) + n H(+)(out). NDH shuttles electrons from NAD(P)H:plastoquinone, via FMN and iron-sulfur (Fe-S) centers, to quinones in the photosynthetic chain and possibly in a chloroplast respiratory chain. The immediate electron acceptor for the enzyme in this species is believed to be plastoquinone. Couples the redox reaction to proton translocation, and thus conserves the redox energy in a proton gradient. The polypeptide is NAD(P)H-quinone oxidoreductase subunit 1, chloroplastic (Pelargonium hortorum (Common geranium)).